The sequence spans 801 residues: Phenylalanine--tRNA ligase beta subunit (801 aa).

Residues 39–153 form the tRNA-binding domain; the sequence is AAGLSKIVVG…EDAVPGEEVF (115 aa). Residues 406 to 481 enclose the B5 domain; that stretch reads TSDVEVSSTL…RIYGYDRLPT (76 aa). Positions 459, 465, 468, and 469 each coordinate Mg(2+). Residues 708-801 form the FDX-ACB domain; that stretch reads TKFPAVSRDV…LEEKVNAEVR (94 aa).

Belongs to the phenylalanyl-tRNA synthetase beta subunit family. Type 1 subfamily. As to quaternary structure, tetramer of two alpha and two beta subunits. Mg(2+) is required as a cofactor.

Its subcellular location is the cytoplasm. It catalyses the reaction tRNA(Phe) + L-phenylalanine + ATP = L-phenylalanyl-tRNA(Phe) + AMP + diphosphate + H(+). The sequence is that of Phenylalanine--tRNA ligase beta subunit from Streptococcus pneumoniae serotype 4 (strain ATCC BAA-334 / TIGR4).